We begin with the raw amino-acid sequence, 1360 residues long: KN motif and ankyrin repeat domains 1 (1360 aa).

The segment at 30 to 68 (PYFVETPYGFQLDLDFVKYVDDIQKGNTIKKLNIQKRRK) is KN motif; Interaction with TLN1. An Important for binding to TLN1 motif is present at residues 41 to 44 (LDLD). Positions 43–52 (LDFVKYVDDI) match the Nuclear export signal 1 (NES 1) motif. A Nuclear localization signal 1 (NLS 1) motif is present at residues 65 to 68 (KRRK). Positions 66–103 (RRKPSVPCPEVRAIPGHQGVWTSTESLSSSNSDDSKQC) are disordered. Residues 88 to 103 (STESLSSSNSDDSKQC) are compositionally biased toward low complexity. The Nuclear export signal 2 (NES 2) signature appears at 125-134 (LETSPTFAVS). Residue Ser-186 is modified to Phosphoserine. Positions 221–253 (DYNSYVPAAPTTSSMGSSVRHSPLSSGISTPVT) are disordered. A compositionally biased stretch (polar residues) spans 230–253 (PTTSSMGSSVRHSPLSSGISTPVT). Residues 244–339 (LSSGISTPVT…SQLELLARAR (96 aa)) form an interaction with PPFIBP1 region. Positions 260–311 (LQHIREQMAIALKRLKELEEQVRTIPVLQVKISVLQEEKRQLASQLKSQRAS) form a coiled coil. At Ser-325 the chain carries Phosphoserine. 2 coiled-coil regions span residues 367 to 394 (FRQLTADMQALERKIQDSSCEVASELRE) and 453 to 487 (ITEADKEIELQQQTIEALKEKIYRLEVQLKETTHD). Positions 618-627 (LTLLKTNLNL) match the Nuclear export signal 3 (NES 3) motif. Disordered stretches follow at residues 929 to 954 (SQPEVEAETAEGKHSRGHEQFPMQGS) and 983 to 1053 (IMKK…DTRG). Composition is skewed to basic and acidic residues over residues 938–947 (AEGKHSRGHE) and 985–995 (KKSDGNKDSNG). Residues 985–998 (KKSDGNKDSNGAKK) carry the Nuclear localization signal 2 (NLS 2) motif. A compositionally biased stretch (low complexity) spans 1010–1025 (ETTSSDESSSDGSSSS). The span at 1026–1047 (ESDDECDTIGYPPEEEEEEEEK) shows a compositional bias: acidic residues. Positions 1081 to 1360 (EPEKEEIRER…PGPTHRGSFD (280 aa)) are interaction with KIF21A. An ANK 0; degenerate repeat occupies 1117-1154 (KDMRICLNTLQHDWFRVSSQKSAVPAMVGDYIAAFEAV). ANK repeat units lie at residues 1169–1199 (NGNTALHYSVSHSNFQIVKLLLDADVCNVDH), 1203–1236 (AGYTPIMLAALAAVEAEKDMQVVEELFSCGDVNA), 1241–1270 (AGQTALMLAVSHGRIDMVKGLLACGADVNI), 1274–1306 (EGSTALMCASEHGHVEIVKLLLAQPGCNGHLED), and 1308–1337 (DGSTALSIALEAGHKDIAVLLYAHLNFSKA). The interval 1337-1360 (AQSPSTPRLGRKTSPGPTHRGSFD) is disordered.

As to quaternary structure, part of a cortical microtubule stabilization complex (CMSC) composed of KANK1, PPFIA1, PPFIBP1, ERC1/ELKS, PHLDB2/LL5beta, CLASPs, KIF21A and possibly additional interactors; within CMSCs KANK1 and PHLDB2/LL5beta appear to be the core components for targeting of microtubule-binding proteins KIF21A and CLASPs, whereas PPFIA1, PPFIBP1 and ERC1/ELKS serve as scaffolds for protein clustering. Interacts (via KN motif) with TLN1 (via R7 domain); this mediates CMSC clustering around focal adhesions. Interacts (via CC1 domain, residues 244-339) with PPFIBP1. Interacts (via ANK repeats 1-5) with KIF21A (via residues 1142-1169). Interacts with YWHAQ; the interaction requires KANK1 phosphorylation at Ser-325 and is enhanced by growth factor stimulation. Interacts with YWHAB, YWHAG, YWHAE, YWHAH, YWHAZ and SFN; the interaction requires KANK1 phosphorylation at Ser-325. Interacts with ARFGEF1; however, colocalization cannot be experimentally confirmed. Interacts with BAIAP2. Interacts with CTNNB1. Interacts (via coiled coil domain) with DAAM1 (via coiled coil domain).

The protein localises to the cytoplasm. It localises to the cell cortex. It is found in the cell projection. The protein resides in the ruffle membrane. Its subcellular location is the nucleus. In terms of biological role, adapter protein that links structural and signaling protein complexes positioned to guide microtubule and actin cytoskeleton dynamics during cell morphogenesis. At focal adhesions (FAs) rims, organizes cortical microtubule stabilizing complexes (CMSCs) and directly interacts with major FA component TLN1, forming macromolecular assemblies positioned to control microtubule-actin crosstalk at the cell edge. Recruits KIF21A in CMSCs at axonal growth cones and regulates axon guidance by suppressing microtubule growth without inducing microtubule disassembly once it reaches the cell cortex. Interacts with ARFGEF1 and participates in establishing microtubule-organizing center (MTOC) orientation and directed cell movement in wound healing. Regulates actin stress fiber formation and cell migration by inhibiting RHOA activation in response to growth factors; this function involves phosphorylation through PI3K/Akt signaling and may depend on the competitive interaction with 14-3-3 adapter proteins to sequester them from active complexes. Inhibits the formation of lamellipodia but not of filopodia; this function may depend on the competitive interaction with BAIAP2 to block its association with activated RAC1. Inhibits fibronectin-mediated cell spreading; this function is partially mediated by BAIAP2. In the nucleus, is involved in beta-catenin-dependent activation of transcription. During cell division, may regulate DAAM1-dependent RHOA activation that signals centrosome maturation and chromosomal segregation. May also be involved in contractile ring formation during cytokinesis. Potential tumor suppressor for renal cell carcinoma. The chain is KN motif and ankyrin repeat domains 1 from Mus musculus (Mouse).